We begin with the raw amino-acid sequence, 313 residues long: MLANIIRIATRQSPLALWQARYVQQCLNHFYPDLHVELVPMVTRGDIILDTPLAKVGGKGLFVKELELALLEGRADIAVHSMKDVPVEFPDGLGLTTICERDDPRDAFVSNRYDSLEQLPEGSCVGTSSLRRQCQLRARRPDLVIRDLRGNVGTRLAKLDNGEYDAIILAVAGLKRLGLEERIRCALSPEESLPAVGQGAIGIECRLDDDRIRQLLAPLNHTDTAARVLAERAMNVRLEGGCQVPIGSYAELEGDTLWLRALVGAPDGSQMIVGERKGSVSDAEKIGVALAEELLAKGASAILQAVYQGQSSS.

S-(dipyrrolylmethanemethyl)cysteine is present on Cys242.

The protein belongs to the HMBS family. As to quaternary structure, monomer. It depends on dipyrromethane as a cofactor.

It catalyses the reaction 4 porphobilinogen + H2O = hydroxymethylbilane + 4 NH4(+). It functions in the pathway porphyrin-containing compound metabolism; protoporphyrin-IX biosynthesis; coproporphyrinogen-III from 5-aminolevulinate: step 2/4. Functionally, tetrapolymerization of the monopyrrole PBG into the hydroxymethylbilane pre-uroporphyrinogen in several discrete steps. The chain is Porphobilinogen deaminase from Pectobacterium atrosepticum (strain SCRI 1043 / ATCC BAA-672) (Erwinia carotovora subsp. atroseptica).